The following is a 259-amino-acid chain: Polycomb group RING finger protein 1 (259 aa).

N-acetylalanine is present on A2. A Phosphoserine modification is found at S3. Residue K24 forms a Glycyl lysine isopeptide (Lys-Gly) (interchain with G-Cter in SUMO2) linkage. The segment at 47–86 (CCLCAGYFVDATTITECLHTFCKSCIVKYLQTSKYCPMCN) adopts an RING-type zinc-finger fold. Positions 86–247 (NIKIHETQPL…LSHWFGKPSP (162 aa)) are necessary for repressor activity. K88 is covalently cross-linked (Glycyl lysine isopeptide (Lys-Gly) (interchain with G-Cter in SUMO2)). Positions 150–255 (LPFSSFDHSK…SPLLLQYSVK (106 aa)) are required for the interaction with the KDM2B-SKP1 heterodimeric complex. Residues 167–255 (EQLSLCLERL…SPLLLQYSVK (89 aa)) are RING-finger and WD40-associated ubiquitin-like domain (RAWUL); sufficient for interaction with BCOR and BCORL1.

As to quaternary structure, interacts with BCORL1, forming heterodimers. The PCGF1-BCORL1 heterodimeric complex interacts with the KDM2B-SKP1 heterodimeric complex to form a homotetrameric polycomb repression complex 1 (PRC1.1). Component of the repressive BCOR complex containing a Polycomb group subcomplex at least composed of RYBP, RING1 and RNF2/RING2. Specifically interacts with BCOR, RING1 and RNF2/RING2. Component of a PRC1-like complex. Interacts with CBX6, CBX7 and CBX8. Interacts with DPPA4, NANOG, POU5F1 and RYBP.

Its subcellular location is the nucleus. Functionally, component of the Polycomb group (PcG) multiprotein BCOR complex, a complex required to maintain the transcriptionally repressive state of some genes, such as BCL6 and the cyclin-dependent kinase inhibitor, CDKN1A. Transcriptional repressor that may be targeted to the DNA by BCL6; this transcription repressor activity may be related to PKC signaling pathway. Represses CDKN1A expression by binding to its promoter, and this repression is dependent on the retinoic acid response element (RARE element). Promotes cell cycle progression and enhances cell proliferation as well. May have a positive role in tumor cell growth by down-regulating CDKN1A. Component of a Polycomb group (PcG) multiprotein PRC1-like complex, a complex class required to maintain the transcriptionally repressive state of many genes, including Hox genes, throughout development. PcG PRC1 complex acts via chromatin remodeling and modification of histones; it mediates monoubiquitination of histone H2A 'Lys-119', rendering chromatin heritably changed in its expressibility. Within the PRC1-like complex, regulates RNF2 ubiquitin ligase activity. Regulates the expression of DPPA4 and NANOG in the NT2 embryonic carcinoma cells. This is Polycomb group RING finger protein 1 (PCGF1) from Bos taurus (Bovine).